Here is an 868-residue protein sequence, read N- to C-terminus: Thiol protease/hemagglutinin PrtT (868 aa).

Residues methionine 1–lysine 27 form the signal peptide. Active-site residues include cysteine 184 and histidine 327.

This sequence belongs to the peptidase C10 family.

Appears to be specific for arginine-containing peptide bonds. Possesses hemagglutinin activity. The polypeptide is Thiol protease/hemagglutinin PrtT (prtT) (Porphyromonas gingivalis (Bacteroides gingivalis)).